A 67-amino-acid chain; its full sequence is MPQGTVKWFNAEKGFGFIAPEDGSADVFVHYTEIQGTGFRTLEENQKVEFEIGHSPKGPQATGVRSL.

The region spanning 4 to 64 is the CSD domain; it reads GTVKWFNAEK…SPKGPQATGV (61 aa).

The protein localises to the cytoplasm. The sequence is that of Probable cold shock protein A (cspA) from Mycobacterium tuberculosis (strain ATCC 25618 / H37Rv).